A 208-amino-acid chain; its full sequence is Octanoyltransferase (208 aa).

In terms of domain architecture, BPL/LPL catalytic spans 29–208 (KTQDELVWLL…KEFNKVFCNC (180 aa)). Residues 68–75 (RGGKYTYH), 140–142 (AFG), and 153–155 (GVS) each bind substrate. Cysteine 171 serves as the catalytic Acyl-thioester intermediate.

This sequence belongs to the LipB family.

It is found in the cytoplasm. The catalysed reaction is octanoyl-[ACP] + L-lysyl-[protein] = N(6)-octanoyl-L-lysyl-[protein] + holo-[ACP] + H(+). It participates in protein modification; protein lipoylation via endogenous pathway; protein N(6)-(lipoyl)lysine from octanoyl-[acyl-carrier-protein]: step 1/2. Its function is as follows. Catalyzes the transfer of endogenously produced octanoic acid from octanoyl-acyl-carrier-protein onto the lipoyl domains of lipoate-dependent enzymes. Lipoyl-ACP can also act as a substrate although octanoyl-ACP is likely to be the physiological substrate. The chain is Octanoyltransferase from Ehrlichia ruminantium (strain Gardel).